The following is a 402-amino-acid chain: Deoxyguanosinetriphosphate triphosphohydrolase-like protein (402 aa).

Residues 73-217 (RLTHTIEVAQ…AAIADDIAYN (145 aa)) enclose the HD domain.

Belongs to the dGTPase family. Type 2 subfamily.

This Brucella suis (strain ATCC 23445 / NCTC 10510) protein is Deoxyguanosinetriphosphate triphosphohydrolase-like protein.